The primary structure comprises 98 residues: Large ribosomal subunit protein uL23 (98 aa).

It belongs to the universal ribosomal protein uL23 family. As to quaternary structure, part of the 50S ribosomal subunit. Contacts protein L29, and trigger factor when it is bound to the ribosome.

Its function is as follows. One of the early assembly proteins it binds 23S rRNA. One of the proteins that surrounds the polypeptide exit tunnel on the outside of the ribosome. Forms the main docking site for trigger factor binding to the ribosome. This Lactobacillus delbrueckii subsp. bulgaricus (strain ATCC 11842 / DSM 20081 / BCRC 10696 / JCM 1002 / NBRC 13953 / NCIMB 11778 / NCTC 12712 / WDCM 00102 / Lb 14) protein is Large ribosomal subunit protein uL23.